The primary structure comprises 66 residues: Transmembrane protein B66L (66 aa).

The signal sequence occupies residues 1-20; the sequence is MDIKRALILFLLFLVVLSNA. The Extracellular portion of the chain corresponds to 21–40; it reads FVDYIISNFNHAVTCRKPTY. Residues 41–61 form a helical membrane-spanning segment; the sequence is FGIVLQGIFLVILFSIVDYLI. The Cytoplasmic segment spans residues 62–66; it reads NENIL.

It belongs to the asfivirus B66L family.

It is found in the host membrane. This is Transmembrane protein B66L from Ornithodoros (relapsing fever ticks).